The chain runs to 148 residues: FAD synthase (148 aa).

Residues T9 to F10, H14 to H17, N92, and Y119 each bind ATP.

It belongs to the archaeal FAD synthase family. Homodimer. A divalent metal cation is required as a cofactor.

It carries out the reaction FMN + ATP + H(+) = FAD + diphosphate. It participates in cofactor biosynthesis; FAD biosynthesis; FAD from FMN: step 1/1. In terms of biological role, catalyzes the transfer of the AMP portion of ATP to flavin mononucleotide (FMN) to produce flavin adenine dinucleotide (FAD) coenzyme. This chain is FAD synthase, found in Methanolacinia petrolearia (strain DSM 11571 / OCM 486 / SEBR 4847) (Methanoplanus petrolearius).